The following is a 105-amino-acid chain: Small ribosomal subunit protein bS20 (105 aa).

This sequence belongs to the bacterial ribosomal protein bS20 family.

In terms of biological role, binds directly to 16S ribosomal RNA. The polypeptide is Small ribosomal subunit protein bS20 (Caldanaerobacter subterraneus subsp. tengcongensis (strain DSM 15242 / JCM 11007 / NBRC 100824 / MB4) (Thermoanaerobacter tengcongensis)).